The primary structure comprises 629 residues: MEYHGGSYDVIVIGAGHAGCEAALASARIGAKTLVITLNLDMIAFMPCNPSIGGPAKGIVVREIDALGGEMGKNIDKTYIQIRMLNTGKGPAVRALRAQADKVLYQREMKKTLENQKNLTLLQGKVERLIVEDGVCKGVITQTGAHYYAKAVVITTGTFLRGEIIIGDIKYSSGPNNQQPSIKLSEHLEELGFELVRFKTGTPPRVNSRTIDYSKTEIQPGDEEPRAFSYETTKYITDQLPCWLTYTTEETHRIIDENLHLSPMYSGMIKGTGPRYCPSIEDKVVRFHDKPRHQIFLEPEGRETEEVYVQGLSTSLPEHIQRKLLETIPGLEKAQLMRAGYAIEYDAIVPTQLWPTLETKLVKNLYTAGQINGTSGYEEAAGQGIMAGINAAHRALGREEIILSRSDAYIGVLIDDLVTKGTNEPYRLLTSRAEYRLLLRHDNADLRLTELGYRIGLISEERYQAFLAKKEAIEREKKRLQTVIIKPTPEVQEVIRQAGGSELKDGIRAADLLRRPEMTYEHIQKLAPADEDIAPEVAEQVEIQIKYEGYIQKSLQEVERLKKMENKKIPEDIDYDAIQGLATEARQKLKQVRPLSIAQASRISGVNPADISILLVYLEQGRIARVSNE.

FAD contacts are provided by residues 14–19 (GAGHAG), Val-126, and Ser-181. Residue 273 to 287 (GPRYCPSIEDKVVRF) coordinates NAD(+). Position 370 (Gln-370) interacts with FAD.

Belongs to the MnmG family. As to quaternary structure, homodimer. Heterotetramer of two MnmE and two MnmG subunits. FAD serves as cofactor.

It is found in the cytoplasm. Its function is as follows. NAD-binding protein involved in the addition of a carboxymethylaminomethyl (cmnm) group at the wobble position (U34) of certain tRNAs, forming tRNA-cmnm(5)s(2)U34. This is tRNA uridine 5-carboxymethylaminomethyl modification enzyme MnmG from Geobacillus thermodenitrificans (strain NG80-2).